An 816-amino-acid polypeptide reads, in one-letter code: Transducer protein Htr18 (816 aa).

2 helical membrane-spanning segments follow: residues 21–41 and 282–302; these read VVIVTIMLVLVGVGVFTTQAV and NIVVLIVTAVAGLGALVLVIG. One can recognise an HAMP 1 domain in the interval 303 to 356; it reads RDALTALTDMSDRAEAIAAGDIDTAIEETTRIDEVGDLRRSFRDIQEYLQTVAG. The tract at residues 399-425 is disordered; that stretch reads DAQETAEQSRKEAEQSREEAEALAAAL. Positions 405–418 are enriched in basic and acidic residues; the sequence is EQSRKEAEQSREEA. An HAMP 2 domain is found at 423–476; that stretch reads AALESQAQDIRETVEHAADGDLTQRLETDTDHESMAAIATALNSLLEELEGTIH. The 237-residue stretch at 495 to 731 folds into the Methyl-accepting transducer domain; it reads SAEEVKRASG…EVVTMVDEVG (237 aa). The interval 790 to 816 is disordered; sequence GGAENTTGAFVRSASTDHSRDATHHDT. Residues 793 to 803 are compositionally biased toward polar residues; the sequence is ENTTGAFVRSA. Positions 804-816 are enriched in basic and acidic residues; the sequence is STDHSRDATHHDT.

It belongs to the methyl-accepting chemotaxis (MCP) protein family. Post-translationally, methylated by CheR.

It localises to the cell membrane. Its function is as follows. Potentially involved in chemo- or phototactic signal transduction. The polypeptide is Transducer protein Htr18 (htr18) (Halobacterium salinarum (strain ATCC 29341 / DSM 671 / R1)).